The following is a 626-amino-acid chain: DNA-directed RNA polymerase subunit beta C-terminal section (626 aa).

The interval 287–307 (NTKSKNTGKGSKPPRASKAQN) is disordered.

It belongs to the RNA polymerase beta chain family. In plastids the minimal PEP RNA polymerase catalytic core is composed of four subunits: alpha, beta, beta', and beta''. When a (nuclear-encoded) sigma factor is associated with the core the holoenzyme is formed, which can initiate transcription.

It is found in the plastid. The protein localises to the chloroplast. It carries out the reaction RNA(n) + a ribonucleoside 5'-triphosphate = RNA(n+1) + diphosphate. In terms of biological role, DNA-dependent RNA polymerase catalyzes the transcription of DNA into RNA using the four ribonucleoside triphosphates as substrates. The polypeptide is DNA-directed RNA polymerase subunit beta C-terminal section (rpoB2) (Chlamydomonas reinhardtii (Chlamydomonas smithii)).